Consider the following 474-residue polypeptide: Phenolic acid decarboxylase (474 aa).

Residues N161, H182, and E224 each contribute to the Mn(2+) site. Prenylated FMN is bound by residues 161–166 (NVGTYR) and 181–182 (MH). The Proton donor role is filled by E273.

This sequence belongs to the UbiD family. YclC subfamily. The cofactor is prenylated FMN. Mn(2+) serves as cofactor.

It carries out the reaction vanillate + H(+) = guaiacol + CO2. Involved in the non-oxidative decarboxylation and detoxification of phenolic derivatives under both aerobic and anaerobic conditions. Phenolic acid decarboxylase that catalyzes the reversible decarboxylation of vanillate. This Streptomyces sp. (strain D7) protein is Phenolic acid decarboxylase.